The primary structure comprises 447 residues: Tubulin beta chain (447 aa).

GTP is bound by residues Gln11, Glu69, Ser138, Gly142, Thr143, Gly144, Asn204, and Asn226. Glu69 is a Mg(2+) binding site. The tract at residues 419–447 (VSEYQQYQDATADEEGEYEDEDQEAEDDM) is disordered. Positions 429-447 (TADEEGEYEDEDQEAEDDM) are enriched in acidic residues.

Belongs to the tubulin family. As to quaternary structure, dimer of alpha and beta chains. A typical microtubule is a hollow water-filled tube with an outer diameter of 25 nm and an inner diameter of 15 nM. Alpha-beta heterodimers associate head-to-tail to form protofilaments running lengthwise along the microtubule wall with the beta-tubulin subunit facing the microtubule plus end conferring a structural polarity. Microtubules usually have 13 protofilaments but different protofilament numbers can be found in some organisms and specialized cells. Mg(2+) is required as a cofactor.

The protein resides in the cytoplasm. It localises to the cytoskeleton. Functionally, tubulin is the major constituent of microtubules, a cylinder consisting of laterally associated linear protofilaments composed of alpha- and beta-tubulin heterodimers. Microtubules grow by the addition of GTP-tubulin dimers to the microtubule end, where a stabilizing cap forms. Below the cap, tubulin dimers are in GDP-bound state, owing to GTPase activity of alpha-tubulin. The sequence is that of Tubulin beta chain (TUBB) from Hordeum vulgare (Barley).